A 251-amino-acid chain; its full sequence is Cell division protein ZapD (251 aa).

This sequence belongs to the ZapD family. In terms of assembly, interacts with FtsZ.

It is found in the cytoplasm. Its function is as follows. Cell division factor that enhances FtsZ-ring assembly. Directly interacts with FtsZ and promotes bundling of FtsZ protofilaments, with a reduction in FtsZ GTPase activity. This chain is Cell division protein ZapD, found in Burkholderia mallei (strain NCTC 10247).